Reading from the N-terminus, the 256-residue chain is Hydroxyacylglutathione hydrolase (256 aa).

Zn(2+)-binding residues include histidine 55, histidine 57, aspartate 59, histidine 60, histidine 113, aspartate 130, and histidine 168.

Belongs to the metallo-beta-lactamase superfamily. Glyoxalase II family. As to quaternary structure, monomer. Zn(2+) serves as cofactor.

The catalysed reaction is an S-(2-hydroxyacyl)glutathione + H2O = a 2-hydroxy carboxylate + glutathione + H(+). The protein operates within secondary metabolite metabolism; methylglyoxal degradation; (R)-lactate from methylglyoxal: step 2/2. Thiolesterase that catalyzes the hydrolysis of S-D-lactoyl-glutathione to form glutathione and D-lactic acid. The polypeptide is Hydroxyacylglutathione hydrolase (Alkalilimnicola ehrlichii (strain ATCC BAA-1101 / DSM 17681 / MLHE-1)).